The sequence spans 933 residues: MTELKAKGPRAPHVAGGPPSPEVGSPLLXRPAAGPFQGSQTSDTLPEVPAIPISLDGLLFPRPCQGQDPLDEKTQDQQSLTDVEGAYSRAEATRGTGGSSSRPPEKDSGLLDSVLDTLLAPSGPGQSQPSPPACEVTSSWCLFGPELPEDPPAAPATQRVLSPLMSRSGGKAGDSSGTAAAHKVLPRGLSPSRQLLLPASGSPHWSGVPVKPSPQPTAVEVEEEDGSESEDSAGPLLKGNPRALGGAAAGGGAAAVPPGAAAGGVALVPKEDSRFSAPRVALVEQDAPMAPGRSPLATTTMDFIHVPIRPLNHALLAARTRHLLEEESYDGGAGAASAFAPPRSSPSASSTPVAVGDFPDCAYPPDADPKDDAYPLYGDFQPPALKIKEEEEGAEASARSPRSYLVAGANPAAFPDFPLGPPPPLPPRAPPSRPGEAAVTAAPASASVSSSSSSGSTLECILYKAEGAPPQQGPFAPPPCKAPGAGGCLLPRDGLPSTSASAAXAGAAPALYPALGLNGLPQLGYQAAVLKEGLQQVYPPYLNYLRPDSEASQSPQYSFESLPQKICLICGDEASGCHYGVLTCGSCKVFFKRAMEGQHNYLCAGRNDCIVDKIRRKNCPACRLRKCCQAGMVLGGRKFKKFNKVRVMRALDAVALPQPVGIPNESQALSQRFTFSPGQDIQFFPPLINLLVSIEPDVIYAGHDNSKPDTSSSLLTSLNQLGERQLLSVVKWSKSLPGFRNLHIDDQITLIQYSWMSLMVFGLGWRSYKHVSGQMLYFAPDLILNEQRMKESSFYSLCLTMWQIPQEFVKLQVSQEEFLCMKVLLLLNTIPLEGLRSQTQFEEMRSSYIRELIKAIGLRQKGVVSSSQRFYQLTKLLDNLHDLVKQLHLYCLNTFIQSRALSVEFPEMMSEVIAAQLPKILAGMVKPLLFHKK.

The tract at residues 1 to 164 (MTELKAKGPR…PATQRVLSPL (164 aa)) is AF3; mediates transcriptional activation. A disordered region spans residues 1-256 (MTELKAKGPR…AAAGGGAAAV (256 aa)). The segment at 1–566 (MTELKAKGPR…YSFESLPQKI (566 aa)) is modulating, Pro-Rich. Ser20 is subject to Phosphoserine. Short sequence motifs (LXXL motif) lie at residues 55 to 59 (LDGLL) and 115 to 119 (LDTLL). Phosphoserine occurs at positions 130 and 162. The segment at 165–305 (MSRSGGKAGD…LATTTMDFIH (141 aa)) is mediates transcriptional transrepression. The short motif at 183–187 (KVLPR) is the Nuclear localization signal element. A phosphoserine mark is found at Ser190 and Ser213. Acidic residues predominate over residues 220 to 231 (EVEEEDGSESED). The residue at position 294 (Ser294) is a Phosphoserine; by MAPK1. The disordered stretch occupies residues 332-380 (GAGAASAFAPPRSSPSASSTPVAVGDFPDCAYPPDADPKDDAYPLYGDF). Residues 335–350 (AASAFAPPRSSPSASS) show a composition bias toward low complexity. At Ser345 the chain carries Phosphoserine; by MAPK. Lys388 participates in a covalent cross-link: Glycyl lysine isopeptide (Lys-Gly) (interchain with G-Cter in SUMO); alternate. Residue Lys388 forms a Glycyl lysine isopeptide (Lys-Gly) (interchain with G-Cter in ubiquitin); alternate linkage. At Ser400 the chain carries Phosphoserine; by CDK2. The tract at residues 415–454 (PDFPLGPPPPLPPRAPPSRPGEAAVTAAPASASVSSSSSS) is disordered. Positions 418–433 (PLGPPPPLPPRAPPSR) are enriched in pro residues. Residues 434 to 454 (PGEAAVTAAPASASVSSSSSS) show a composition bias toward low complexity. Residues 456-546 (STLECILYKA…VYPPYLNYLR (91 aa)) are AF1; mediates transcriptional activation. A Glycyl lysine isopeptide (Lys-Gly) (interchain with G-Cter in SUMO) cross-link involves residue Lys531. NR C4-type zinc fingers lie at residues 567–587 (CLIC…CGSC) and 603–627 (CAGR…LRKC). The segment at residues 567–639 (CLICGDEASG…AGMVLGGRKF (73 aa)) is a DNA-binding region (nuclear receptor). The residue at position 676 (Ser676) is a Phosphoserine. In terms of domain architecture, NR LBD spans 679 to 913 (QDIQFFPPLI…EFPEMMSEVI (235 aa)). The tract at residues 687–933 (LINLLVSIEP…MVKPLLFHKK (247 aa)) is AF2; mediates transcriptional activation. Arg766 is a progesterone binding site.

It belongs to the nuclear hormone receptor family. As to quaternary structure, interacts with SMARD1 and UNC45A. Interacts with CUEDC2; the interaction promotes ubiquitination, decreases sumoylation, and represses transcriptional activity. Interacts with PIAS3; the interaction promotes sumoylation of PR in a hormone-dependent manner, inhibits DNA-binding, and alters nuclear export. Interacts with SP1; the interaction requires ligand-induced phosphorylation on Ser-345 by ERK1/2-MAPK. Interacts with PRMT2. Interacts with NCOA2 and NCOA1. Interacts with KLF9. Interacts with GTF2B. Phosphorylated on multiple serine sites. Several of these sites are hormone-dependent. Phosphorylation on Ser-294 is highly hormone-dependent and modulates ubiquitination and sumoylation on Lys-388. Phosphorylation on Ser-345 also requires induction by hormone. Basal phosphorylation on Ser-162, Ser-190 and Ser-400 is increased in response to progesterone and can be phosphorylated in vitro by the CDK2-A1 complex. Increased levels of phosphorylation on Ser-400 also in the presence of EGF, heregulin, IGF, PMA and FBS. Phosphorylation at this site by CDK2 is ligand-independent, and increases nuclear translocation and transcriptional activity. Phosphorylation at Ser-162 and Ser-294, but not at Ser-190, is impaired during the G(2)/M phase of the cell cycle. Phosphorylation on Ser-345 by ERK1/2 MAPK is required for interaction with SP1. Post-translationally, sumoylation is hormone-dependent and represses transcriptional activity. Sumoylation on all three sites is enhanced by PIAS3. Desumoylated by SENP1. Sumoylation on Lys-388, the main site of sumoylation, is repressed by ubiquitination on the same site, and modulated by phosphorylation at Ser-294. In terms of processing, ubiquitination is hormone-dependent and represses sumoylation on the same site. Promoted by MAPK-mediated phosphorylation on Ser-294. Ubiquitinated by UBR5, leading to its degradation: UBR5 specifically recognizes and binds ligand-bound PGR when it is not associated with coactivators (NCOAs). In presence of NCOAs, the UBR5-degron is not accessible, preventing its ubiquitination and degradation. Palmitoylated by ZDHHC7 and ZDHHC21. Palmitoylation is required for plasma membrane targeting and for rapid intracellular signaling via ERK and AKT kinases and cAMP generation.

It is found in the nucleus. The protein localises to the cytoplasm. Its function is as follows. The steroid hormones and their receptors are involved in the regulation of eukaryotic gene expression and affect cellular proliferation and differentiation in target tissues. Transcriptional activator of several progesteron-dependent promoters in a variety of cell types. Involved in activation of SRC-dependent MAPK signaling on hormone stimulation. The sequence is that of Progesterone receptor (PGR) from Chlorocebus aethiops (Green monkey).